The primary structure comprises 1039 residues: MKKVEPVNFRELDKKIKKFWEENDIYQKVKKKNERNKEFYFVDGPPYCSGAIHLGTAWNKIIKDTYLRFKRMQGYNVLDKAGWDMHGLPIEVKVENEFGIKNKKEIETKIGVKQFIEKCKEFALKHKEIMEKQFKNLGVWLDWENAYMPITKEYMEIGWWTLKVAHEKGLLTRDLRVVYWCPRCETALAEHEVRGEYKEVYDPSVYVKFRLANEENTYIVIWTTTPWTLVANLAVTVHPDYDYAYVEVEFDDKKEVWIIAEKLVEEVINKAKKFHNIKNYKIIKKVKGKELEGIKYIHPLLEENERQKEFAELENAHTVILGEHVTLEGGTGLVHTAPGHGEEDFEVGKKYNLPIYSPIDDEGKYVEGKWKGVFVKDADAEIIETLKNKGLLVYAGKIKHSYPHCWRCKTPLLFRATEQWFLEISKIKDNIIEHAKTVQWIPHWVETRYINGVKFVGDWNISRQRYWGIPIPVWVCEKCGKYIVVGSVEELEEKMINKDEVGEINDLHKPTVDKIKLRCECGGEMKRVPDVLDVWFDSGLAPYASIGVKELKKADFITEGHDQVTKWFYSQHALSAIVFNDIPYKKCLMHGFTLDEHGDKMSKSLGNVVNPDDVVEKYGADLLRFYLLSANKVWEDLRFVWSEMDDVLSLFNTLWNAYMFAVNYMVLDNFKPDEKYFEYLKDEDRWIVSRINSVAKIAIENLEVPYFHTYTWTLKDFILNDLSRWYIRLIRDRTWKEKDDADKLAAYQTLYYVLLKLATILAPVAPHTAEAIYQNLKTEDMEESIFMNKIEVDEEFIDEELERDMAIVRDVVDAIYRGRDRIKYTLRYPLKEITIAGGEEVKKAVERFEYIIKEQGNVKNIKFGEVEGSKYIIKPNYRELGKRYRSEVPKVVEALNKADAKELMERLKEGAVILDGYEIKPEYVEIRLEIPEHIAGVEFSKGTVFINTEITDDLIKEGLMREVIRRIQAMRKDMDLDIEEKIKIKVEGIDLDEFKEIIEREVRGQFVDEIKADYEKDWEIKTPNGEKYNVKIAIERINK.

Residues 46–56 (PYCSGAIHLGT) carry the 'HIGH' region motif. The 'KMSKS' region motif lies at 600-604 (KMSKS). Lysine 603 is a binding site for ATP.

This sequence belongs to the class-I aminoacyl-tRNA synthetase family. IleS type 2 subfamily. As to quaternary structure, monomer. It depends on Zn(2+) as a cofactor.

The protein resides in the cytoplasm. It carries out the reaction tRNA(Ile) + L-isoleucine + ATP = L-isoleucyl-tRNA(Ile) + AMP + diphosphate. Catalyzes the attachment of isoleucine to tRNA(Ile). As IleRS can inadvertently accommodate and process structurally similar amino acids such as valine, to avoid such errors it has two additional distinct tRNA(Ile)-dependent editing activities. One activity is designated as 'pretransfer' editing and involves the hydrolysis of activated Val-AMP. The other activity is designated 'posttransfer' editing and involves deacylation of mischarged Val-tRNA(Ile). This is Isoleucine--tRNA ligase from Methanocaldococcus jannaschii (strain ATCC 43067 / DSM 2661 / JAL-1 / JCM 10045 / NBRC 100440) (Methanococcus jannaschii).